A 200-amino-acid chain; its full sequence is Protein GrpE (200 aa).

Positions 1 to 23 (MEEEIKETSEDKEEENTEAEAVE) are enriched in acidic residues. The disordered stretch occupies residues 1 to 39 (MEEEIKETSEDKEEENTEAEAVENNEKSEENAGNVEEDE).

This sequence belongs to the GrpE family. As to quaternary structure, homodimer.

The protein resides in the cytoplasm. Participates actively in the response to hyperosmotic and heat shock by preventing the aggregation of stress-denatured proteins, in association with DnaK and GrpE. It is the nucleotide exchange factor for DnaK and may function as a thermosensor. Unfolded proteins bind initially to DnaJ; upon interaction with the DnaJ-bound protein, DnaK hydrolyzes its bound ATP, resulting in the formation of a stable complex. GrpE releases ADP from DnaK; ATP binding to DnaK triggers the release of the substrate protein, thus completing the reaction cycle. Several rounds of ATP-dependent interactions between DnaJ, DnaK and GrpE are required for fully efficient folding. This chain is Protein GrpE, found in Brachyspira hyodysenteriae (strain ATCC 49526 / WA1).